Reading from the N-terminus, the 361-residue chain is Phosphoserine aminotransferase (361 aa).

Arg42 lines the L-glutamate pocket. Pyridoxal 5'-phosphate contacts are provided by residues Ala76–Thr77, Trp102, Thr152, Asp172, and Gln195. Position 196 is an N6-(pyridoxal phosphate)lysine (Lys196). Asn237–Thr238 is a pyridoxal 5'-phosphate binding site.

The protein belongs to the class-V pyridoxal-phosphate-dependent aminotransferase family. SerC subfamily. As to quaternary structure, homodimer. Requires pyridoxal 5'-phosphate as cofactor.

The protein localises to the cytoplasm. It catalyses the reaction O-phospho-L-serine + 2-oxoglutarate = 3-phosphooxypyruvate + L-glutamate. The catalysed reaction is 4-(phosphooxy)-L-threonine + 2-oxoglutarate = (R)-3-hydroxy-2-oxo-4-phosphooxybutanoate + L-glutamate. The protein operates within amino-acid biosynthesis; L-serine biosynthesis; L-serine from 3-phospho-D-glycerate: step 2/3. It functions in the pathway cofactor biosynthesis; pyridoxine 5'-phosphate biosynthesis; pyridoxine 5'-phosphate from D-erythrose 4-phosphate: step 3/5. Functionally, catalyzes the reversible conversion of 3-phosphohydroxypyruvate to phosphoserine and of 3-hydroxy-2-oxo-4-phosphonooxybutanoate to phosphohydroxythreonine. The chain is Phosphoserine aminotransferase from Xanthomonas axonopodis pv. citri (strain 306).